Reading from the N-terminus, the 498-residue chain is ATP synthase subunit beta, chloroplastic (498 aa).

Residue 172-179 (GGAGVGKT) participates in ATP binding.

Belongs to the ATPase alpha/beta chains family. As to quaternary structure, F-type ATPases have 2 components, CF(1) - the catalytic core - and CF(0) - the membrane proton channel. CF(1) has five subunits: alpha(3), beta(3), gamma(1), delta(1), epsilon(1). CF(0) has four main subunits: a(1), b(1), b'(1) and c(9-12).

The protein resides in the plastid. It localises to the chloroplast thylakoid membrane. The catalysed reaction is ATP + H2O + 4 H(+)(in) = ADP + phosphate + 5 H(+)(out). Functionally, produces ATP from ADP in the presence of a proton gradient across the membrane. The catalytic sites are hosted primarily by the beta subunits. This chain is ATP synthase subunit beta, chloroplastic, found in Morus indica (Mulberry).